Consider the following 227-residue polypeptide: Phosphatidylethanolamine-binding protein 4 (227 aa).

The first 22 residues, 1–22, serve as a signal peptide directing secretion; it reads MGWTMRLVTAALLLGLMMVVTG. Asparagine 169 carries N-linked (GlcNAc...) (complex) asparagine glycosylation. Residues 188-227 are important for secretion; it reads EPEASTQFMTQNYQDSPTLQAPRERASEPKHKNQAEIAAC. A disordered region spans residues 202-227; the sequence is DSPTLQAPRERASEPKHKNQAEIAAC. The span at 209 to 221 shows a compositional bias: basic and acidic residues; that stretch reads PRERASEPKHKNQ.

The protein belongs to the phosphatidylethanolamine-binding protein family.

Its subcellular location is the secreted. Promotes AKT phosphorylation, suggesting a possible role in the PI3K-AKT signaling pathway. The protein is Phosphatidylethanolamine-binding protein 4 (PEBP4) of Homo sapiens (Human).